The following is a 687-amino-acid chain: Immune inhibitor A (687 aa).

The span at 1–12 (MKDAKADTKEKL) shows a compositional bias: basic and acidic residues. A signal peptide (or 32) is located at residues 1 to 25 (MKDAKADTKEKLNQPATGTPAATGP). The disordered stretch occupies residues 1 to 43 (MKDAKADTKEKLNQPATGTPAATGPVKGGLNGKVPTSPAKQKA). The propeptide occupies 26–40 (VKGGLNGKVPTSPAK). Histidine 266 contacts Zn(2+). Glutamate 267 is an active-site residue. Position 270 (histidine 270) interacts with Zn(2+).

The protein belongs to the peptidase M6 family. The cofactor is Zn(2+). Ca(2+) serves as cofactor.

The protein localises to the secreted. Functionally, neutral metalloprotease that is secreted to degrade antibacterial proteins produced by the insect host for its defense (attacins and cecropins). Probably degrades some unknown crucial protein(s) too, since it is toxic when injected to insect larvae. In Bacillus thuringiensis subsp. alesti, this protein is Immune inhibitor A (ina).